The following is a 120-amino-acid chain: Protein RALF-like 1 (120 aa).

Residues 1-26 (MDKSFTLFLTLTILVVFIISSPPVQA) form the signal peptide. Positions 27-71 (GFANDLGGVAWATTGDNGSGCHGSIAECIGAEEEEMDSEINRRIL) are cleaved as a propeptide — removed in mature form. Asn-43 carries an N-linked (GlcNAc...) asparagine glycan. Disulfide bonds link Cys-89–Cys-99 and Cys-112–Cys-118.

The protein belongs to the plant rapid alkalinization factor (RALF) family. Interacts with FER and promotes its phosphorylation and subsequent activation. Proteolytically cleaved, probably by S1P, a subtilisin-like serine protease (subtilase). In terms of tissue distribution, expressed in roots and stems.

The protein resides in the secreted. Functionally, cell signaling peptide that may regulate plant stress, growth, and development. Mediates a rapid alkalinization of extracellular space by mediating a transient increase in the cytoplasmic Ca(2+) concentration leading to a calcium-dependent signaling events through a cell surface receptor and a concomitant activation of some intracellular mitogen-activated protein kinases. Mostly active in roots. Prevents plant growth (e.g. root and leaf length). Suppresses cell elongation of the primary root by activating the cell surface receptor FER and triggering phosphorylation of AHA2 and subsequent extracellular alkalinization. This is Protein RALF-like 1 (RALF1) from Arabidopsis thaliana (Mouse-ear cress).